A 950-amino-acid chain; its full sequence is Leucine--tRNA ligase (950 aa).

Positions 72–83 (PYPSGEGLHVGH) match the 'HIGH' region motif. The short motif at 722–726 (KIGKS) is the 'KMSKS' region element. Lys725 is a binding site for ATP.

This sequence belongs to the class-I aminoacyl-tRNA synthetase family.

It localises to the cytoplasm. The catalysed reaction is tRNA(Leu) + L-leucine + ATP = L-leucyl-tRNA(Leu) + AMP + diphosphate. In Mycobacterium sp. (strain JLS), this protein is Leucine--tRNA ligase.